The chain runs to 300 residues: Probable mitochondrial 2-oxodicarboxylate carrier (300 aa).

The disordered stretch occupies residues 1–20 (MTSKGNAGNPPTPTPAPVKS). 3 Solcar repeats span residues 21 to 104 (QPLW…YEKQ), 114 to 200 (PTQM…IKSA), and 209 to 295 (GVLV…VMKL). 6 consecutive transmembrane segments (helical) span residues 27 to 47 (LVSGGIAGVSEILVMYPLDVV), 74 to 93 (LKMYRGIVPPILVEAPKRAI), 120 to 140 (IGSGVLAGITEAFIVVPFELV), 171 to 191 (GFFKGLESTIWRHACWNGGYF), 209 to 229 (GVLVNNFIAGGLAGTFGTMLN), and 278 to 298 (LGPGGGILLVVNEFVMKLLAG).

Belongs to the mitochondrial carrier (TC 2.A.29) family.

It is found in the mitochondrion inner membrane. The enzyme catalyses 2-oxoadipate(in) + 2-oxoglutarate(out) = 2-oxoadipate(out) + 2-oxoglutarate(in). The catalysed reaction is hexanedioate(in) + 2-oxoglutarate(out) = hexanedioate(out) + 2-oxoglutarate(in). It carries out the reaction L-2-aminoadipate(in) + 2-oxoglutarate(out) = L-2-aminoadipate(out) + 2-oxoglutarate(in). It catalyses the reaction glutarate(in) + 2-oxoglutarate(out) = glutarate(out) + 2-oxoglutarate(in). The enzyme catalyses 2-oxoheptanedioate(in) + 2-oxoglutarate(out) = 2-oxoheptanedioate(out) + 2-oxoglutarate(in). The catalysed reaction is heptanedioate(in) + 2-oxoglutarate(out) = heptanedioate(out) + 2-oxoglutarate(in). It carries out the reaction citrate(in) + 2-oxoglutarate(out) = citrate(out) + 2-oxoglutarate(in). Its function is as follows. Transports dicarboxylates across the inner membranes of mitochondria by a counter-exchange mechanism. Can transport 2-oxoadipate (2-oxohexanedioate), 2-oxoglutarate, adipate (hexanedioate), glutarate, and to a lesser extent, pimelate (heptanedioate), 2-oxopimelate (2-oxoheptanedioate), 2-aminoadipate (2-aminohexanedioate), oxaloacetate, and citrate. Plays a central role in catabolism of lysine, hydroxylysine, and tryptophan, by transporting common metabolite intermediates (such as 2-oxoadipate) into the mitochondria, where it is converted into acetyl-CoA and can enter the citric acid (TCA) cycle. In Dictyostelium discoideum (Social amoeba), this protein is Probable mitochondrial 2-oxodicarboxylate carrier (mcfT).